We begin with the raw amino-acid sequence, 493 residues long: 3-ketoacyl-CoA synthase 16 (493 aa).

The first 35 residues, 1-35 (MDYPMKKVKIFFNYLMAHRFKLCFLPLMVAIAVEA), serve as a signal peptide directing secretion. A helical transmembrane segment spans residues 52 to 74 (NNHTSLTMFFLYLALGSTLYLMT). Residues 71 to 366 (YLMTRPKPVY…FFVRFVKKKF (296 aa)) form the FAE domain. Active-site residues include Cys-221, His-300, His-384, His-388, His-417, and Asn-421.

Belongs to the thiolase-like superfamily. Chalcone/stilbene synthases family. Expressed in siliques.

It localises to the membrane. It catalyses the reaction a very-long-chain acyl-CoA + malonyl-CoA + H(+) = a very-long-chain 3-oxoacyl-CoA + CO2 + CoA. The protein operates within lipid metabolism; fatty acid biosynthesis. This is 3-ketoacyl-CoA synthase 16 from Arabidopsis thaliana (Mouse-ear cress).